Reading from the N-terminus, the 845-residue chain is Receptor-like protein Cf-9 homolog (845 aa).

The signal sequence occupies residues 1–19 (MGCVKLVFFMLLKLDLLEF). The interval 20-70 (KNMFTVNPNASDYCYDYTDQRMQSYPRTLFWNKSTDCCSWDGIHCDETTGQ) is N-cap. Residues 20-794 (KNMFTVNPNA…EEDSPMISWQ (775 aa)) are Extracellular-facing. N-linked (GlcNAc...) asparagine glycans are attached at residues Asn28, Asn51, and Asn88. One copy of the LRR 1; degenerate repeat lies at 71–94 (VVELDLRCSQLQGKFHSNSSLFQL). 25 LRR repeats span residues 95-118 (SNLKRLDLSFNDFTGSLISPKFGE), 119-143 (FSDLTHLDLSDSNFTGVIPSEISHL), 144-171 (SKLHVLRIHDLNELSLGPHNFELLLKNL), 172-193 (TQLRELNLDSVNISSTIPSNFS), 194-217 (SHLTNLWLPYTELRGVLPERVFHL), 219-242 (DLEFLHLSYNPQLTVRFPTTKWNS), 244-266 (ASLMKLYVHSVNIADRIPESFSH), 267-291 (LTSLHALYMGRCNLSGHIPKPLWNL), 292-316 (TNIESLFLGDNHLEGPIPQLTRFEK), 318-338 (KRLSLGNNNLHGGLEFLSFNR), 340-364 (WTQLEILYFSSNYLTGPIPSNVSGL), 365-388 (QNLGWLFLSSNHLNGSIPSWIFSL), 390-410 (SLVVLDLSNNTFSGKIQEFKS), 411-434 (KTLSTVTLKQNQLEGPIPNSLLNQ), 436-458 (SLQFLLLSHNNISGYISSSICNL), 459-482 (KTLMVLDLGSNNLEGTIPQCVGER), 484-506 (EYLLDLDLSNNRLSGTINTTFSI), 507-531 (GNSFKAISLHGNKLTGKVPRSLINC), 532-554 (KYLKLLDLGNNQLNDTFPNWLGY), 555-579 (LSQLKILSLRSNKLHGPIKSSGSTN), 581-605 (FMRLQILDLSSNGFSGNLPERILGN), 649-672 (LDSNMIINLSKNRFEGHIPSIIGD), 673-696 (LVGLRTLNLSRNALEGHIPASFQN), 698-721 (SVLESLDLSSNRISGEIPQQLASL), and 723-741 (FLEVLNLSHNHLVGCIPKG). 4 N-linked (GlcNAc...) asparagine glycosylation sites follow: Asn131, Asn170, Asn183, and Asn191. N-linked (GlcNAc...) asparagine glycosylation occurs at Asn241. 2 N-linked (GlcNAc...) asparagine glycosylation sites follow: Asn279 and Asn290. Residues Asn337, Asn360, Asn378, and Asn398 are each glycosylated (N-linked (GlcNAc...) asparagine). A glycan (N-linked (GlcNAc...) asparagine) is linked at Asn446. N-linked (GlcNAc...) asparagine glycosylation occurs at Asn501. Asn545 is a glycosylation site (N-linked (GlcNAc...) asparagine). Asn656, Asn680, and Asn696 each carry an N-linked (GlcNAc...) asparagine glycan. N-linked (GlcNAc...) asparagine glycans are attached at residues Asn728 and Asn749. A C-cap/acidic domain region spans residues 742–794 (KQFDSFGNTSYQGNDGLRGFPLSKLCGVDDQVTTPAELDQEEEEEDSPMISWQ). A helical transmembrane segment spans residues 795-815 (GVLVGYGCGLVIGLSVIYIMW). Residues 816–845 (STQYPAWFSRMDLKLEHIITTRMKKHKKRY) lie on the Cytoplasmic side of the membrane.

This sequence belongs to the RLP family.

It is found in the cell membrane. At the opposite of its homolog Cf-9 found in S.pimpinellifolium, was not able to confer resistance to the fungal pathogen C.fulvum. This chain is Receptor-like protein Cf-9 homolog, found in Solanum lycopersicum (Tomato).